A 198-amino-acid polypeptide reads, in one-letter code: Recombination protein RecR (198 aa).

The C4-type zinc-finger motif lies at 57–72; it reads CAQCRTLTEHSLCEYC. In terms of domain architecture, Toprim spans 80 to 175; that stretch reads SLLCIVESPA…RTTRIAHGIP (96 aa).

This sequence belongs to the RecR family.

May play a role in DNA repair. It seems to be involved in an RecBC-independent recombinational process of DNA repair. It may act with RecF and RecO. This is Recombination protein RecR from Methylococcus capsulatus (strain ATCC 33009 / NCIMB 11132 / Bath).